We begin with the raw amino-acid sequence, 308 residues long: Polyketide transferase claH (308 aa).

Residues 50–280 (SDIAVYFSQQ…RVEVAAGKSH (231 aa)) are abhydrolase domain.

This sequence belongs to the polyketide transferase af380 family.

It functions in the pathway secondary metabolite biosynthesis. In terms of biological role, polyketide transferase; part of the cla gene cluster that produces clavatol and ortho-quinone methide. The clavatol biosynthesis cluster cla and the terrestric acid cluster tra are both involved in the production of peniphenones and penilactones. The non-reducing PKS claF is responsible for the formation of clavatol from successive condensations of 3 malonyl-CoA units, presumably with a simple acetyl-CoA starter unit, and 2 methylation steps. The esterase claE probably collaborates with claF by catalyzing the hydrolysis of ACP-bound acyl intermediates to free the ACP from stalled intermediates. The clavatol oxidase claD then converts clavatol to hydroxyclavatol. Spontaneous dehydration of hydroxyclavatol leads to the accumulation of the highly active ortho-quinone methide. On the other hand, the PKS-NRPS hybrid traA is involved in the formation of crustosic acid, with the help of traB and traD. The polyketide synthase module (PKS) of traA is responsible for the synthesis of the polyketide backbone via the condensation of an acetyl-CoA starter unit with 3 malonyl-CoA units. The downstream nonribosomal peptide synthetase (NRPS) module then amidates the carboxyl end of the polyketide with L-malic acid. Because traA lacks a designated enoylreductase (ER) domain, the required activity is provided the enoyl reductase traG. Crustosic acid undergoes decarboxylation and isomerization to the terrestric acid, catalyzed by the 2-oxoglutarate-dependent dioxygenase traH. Both acids are further converted to the 2 gamma-butyrolactones (R)-5-methyltetronic acid and (S)-5-carboxylmethyltetronic acid, with involvement of the cytochrome P450 monooxygenase claJ. Spontaneous addition of the methide to these gamma-butyrolactones leads to peniphenone D and penilactone D, which undergo again stereospecific attacking by methide to give penilactones A and B. The function of the polyketide transferase claH has not been investigated yet. The polypeptide is Polyketide transferase claH (Penicillium crustosum (Blue mold fungus)).